The chain runs to 214 residues: MSLGLVGRKVGMTRIFAEDGATIPVTVLDMSSNRVTQIKTAETDGYNAVQVTYGSKKASRVNKADAGHFAKAGVEAGLGLAEFALSADALSNFKPGDAIAVEIFTVGQLVDVTGTSKGKGFSGVIKRHNFSSNRASHGNSRSHNTPGSIGQAQDPGRVFPGKRMAGQYGNVKSTVQCLEIVRVDAERQLILVKGAVPGAKNGDVVVRPSVKAGA.

Residues 130-151 show a composition bias toward polar residues; that stretch reads FSSNRASHGNSRSHNTPGSIGQ. Residues 130–163 form a disordered region; the sequence is FSSNRASHGNSRSHNTPGSIGQAQDPGRVFPGKR. N5-methylglutamine is present on Q153.

It belongs to the universal ribosomal protein uL3 family. In terms of assembly, part of the 50S ribosomal subunit. Forms a cluster with proteins L14 and L19. Post-translationally, methylated by PrmB.

Its function is as follows. One of the primary rRNA binding proteins, it binds directly near the 3'-end of the 23S rRNA, where it nucleates assembly of the 50S subunit. In Chromobacterium violaceum (strain ATCC 12472 / DSM 30191 / JCM 1249 / CCUG 213 / NBRC 12614 / NCIMB 9131 / NCTC 9757 / MK), this protein is Large ribosomal subunit protein uL3.